The sequence spans 635 residues: Threonine--tRNA ligase (635 aa).

The 61-residue stretch at 1–61 folds into the TGS domain; it reads MVSIRLPDGS…DRDAALAIIT (61 aa). The catalytic stretch occupies residues 242-533; that stretch reads DHRKLGKQLD…LIEHHAGAMP (292 aa). 3 residues coordinate Zn(2+): cysteine 333, histidine 384, and histidine 510.

The protein belongs to the class-II aminoacyl-tRNA synthetase family. Homodimer. It depends on Zn(2+) as a cofactor.

Its subcellular location is the cytoplasm. It catalyses the reaction tRNA(Thr) + L-threonine + ATP = L-threonyl-tRNA(Thr) + AMP + diphosphate + H(+). Catalyzes the attachment of threonine to tRNA(Thr) in a two-step reaction: L-threonine is first activated by ATP to form Thr-AMP and then transferred to the acceptor end of tRNA(Thr). Also edits incorrectly charged L-seryl-tRNA(Thr). In Burkholderia ambifaria (strain ATCC BAA-244 / DSM 16087 / CCUG 44356 / LMG 19182 / AMMD) (Burkholderia cepacia (strain AMMD)), this protein is Threonine--tRNA ligase.